The primary structure comprises 160 residues: SsrA-binding protein (160 aa).

It belongs to the SmpB family.

The protein localises to the cytoplasm. Functionally, required for rescue of stalled ribosomes mediated by trans-translation. Binds to transfer-messenger RNA (tmRNA), required for stable association of tmRNA with ribosomes. tmRNA and SmpB together mimic tRNA shape, replacing the anticodon stem-loop with SmpB. tmRNA is encoded by the ssrA gene; the 2 termini fold to resemble tRNA(Ala) and it encodes a 'tag peptide', a short internal open reading frame. During trans-translation Ala-aminoacylated tmRNA acts like a tRNA, entering the A-site of stalled ribosomes, displacing the stalled mRNA. The ribosome then switches to translate the ORF on the tmRNA; the nascent peptide is terminated with the 'tag peptide' encoded by the tmRNA and targeted for degradation. The ribosome is freed to recommence translation, which seems to be the essential function of trans-translation. The protein is SsrA-binding protein of Dinoroseobacter shibae (strain DSM 16493 / NCIMB 14021 / DFL 12).